The sequence spans 451 residues: Probable D-serine dehydratase (451 aa).

The disordered stretch occupies residues 1–55; that stretch reads MPGRTRPSCRLAITFTPRPDSATPRAGRAAPATGRRSNRSRSTLSATASPMPRRP. Residues 22–35 show a composition bias toward low complexity; sequence ATPRAGRAAPATGR. Lysine 118 bears the N6-(pyridoxal phosphate)lysine mark.

This sequence belongs to the serine/threonine dehydratase family. DsdA subfamily. Pyridoxal 5'-phosphate serves as cofactor.

It catalyses the reaction D-serine = pyruvate + NH4(+). This chain is Probable D-serine dehydratase, found in Paracidovorax citrulli (strain AAC00-1) (Acidovorax citrulli).